The chain runs to 485 residues: Proline--tRNA ligase (485 aa).

The protein belongs to the class-II aminoacyl-tRNA synthetase family. ProS type 3 subfamily. As to quaternary structure, homodimer.

Its subcellular location is the cytoplasm. The catalysed reaction is tRNA(Pro) + L-proline + ATP = L-prolyl-tRNA(Pro) + AMP + diphosphate. Its function is as follows. Catalyzes the attachment of proline to tRNA(Pro) in a two-step reaction: proline is first activated by ATP to form Pro-AMP and then transferred to the acceptor end of tRNA(Pro). In Methanopyrus kandleri (strain AV19 / DSM 6324 / JCM 9639 / NBRC 100938), this protein is Proline--tRNA ligase.